The primary structure comprises 690 residues: Methionine--tRNA ligase (690 aa).

A 'HIGH' region motif is present at residues 12–22; sequence PYANGSIHLGH. Residues cysteine 143, cysteine 146, cysteine 156, and cysteine 159 each contribute to the Zn(2+) site. The short motif at 328–332 is the 'KMSKS' region element; sequence KMSKS. Lysine 331 is a binding site for ATP. In terms of domain architecture, tRNA-binding spans 582 to 690; that stretch reads DFAKVDLRIA…SGAEPGMKVK (109 aa).

It belongs to the class-I aminoacyl-tRNA synthetase family. MetG type 1 subfamily. Homodimer. Zn(2+) is required as a cofactor.

It localises to the cytoplasm. The enzyme catalyses tRNA(Met) + L-methionine + ATP = L-methionyl-tRNA(Met) + AMP + diphosphate. Functionally, is required not only for elongation of protein synthesis but also for the initiation of all mRNA translation through initiator tRNA(fMet) aminoacylation. In Thiobacillus denitrificans (strain ATCC 25259 / T1), this protein is Methionine--tRNA ligase.